The chain runs to 103 residues: Pyrimidine/purine nucleoside phosphorylase (103 aa).

The protein belongs to the nucleoside phosphorylase PpnP family.

It carries out the reaction a purine D-ribonucleoside + phosphate = a purine nucleobase + alpha-D-ribose 1-phosphate. The catalysed reaction is adenosine + phosphate = alpha-D-ribose 1-phosphate + adenine. The enzyme catalyses cytidine + phosphate = cytosine + alpha-D-ribose 1-phosphate. It catalyses the reaction guanosine + phosphate = alpha-D-ribose 1-phosphate + guanine. It carries out the reaction inosine + phosphate = alpha-D-ribose 1-phosphate + hypoxanthine. The catalysed reaction is thymidine + phosphate = 2-deoxy-alpha-D-ribose 1-phosphate + thymine. The enzyme catalyses uridine + phosphate = alpha-D-ribose 1-phosphate + uracil. It catalyses the reaction xanthosine + phosphate = alpha-D-ribose 1-phosphate + xanthine. Functionally, catalyzes the phosphorolysis of diverse nucleosides, yielding D-ribose 1-phosphate and the respective free bases. Can use uridine, adenosine, guanosine, cytidine, thymidine, inosine and xanthosine as substrates. Also catalyzes the reverse reactions. In Shewanella baltica (strain OS195), this protein is Pyrimidine/purine nucleoside phosphorylase.